The primary structure comprises 208 residues: Myosin light chain 6B (208 aa).

A disordered region spans residues 1–51 (MPPKKDVPVKKPAGPSISKPAAKPAAAGAPPAKTKAEPAVPQAPQKTQEPP). A compositionally biased stretch (low complexity) spans 10 to 40 (KKPAGPSISKPAAKPAAAGAPPAKTKAEPAV). EF-hand domains follow at residues 64-99 (DQLEEFKEAFELFDRVGDGKILYSQCGDVMRALGQN), 141-176 (GTYEDYLEGFRVFDKEGNGKVMGAELRHVLTTLGEK), and 176-208 (KMTEEEVETVLAGHEDSNGCINYEAFLKHILSV).

Myosin is a hexamer of 2 heavy chains and 4 light chains.

Regulatory light chain of myosin. Does not bind calcium. This Homo sapiens (Human) protein is Myosin light chain 6B (MYL6B).